A 226-amino-acid chain; its full sequence is MFPLLIVLSQLPRLTLAVPHCIRSLKDSEHAPEEVFASKEAANIFMHRRLLNNRFDLELFTPGDLERECYEEFCSYEEAREILGDDENTIKFWQTYSIKGPTTGSDVNKEKIDVMSLLTGLIVAGVFLVIFGLVGYYVCLTKCKRRPYPSSSANYTRTARYTPSIVFRSPEEAVLSPSTSSEDAGLPSYEQAVALTRKHSVSPPPPYPGPARGFRVFKKSMSLPSH.

Positions 1–17 are cleaved as a signal peptide; that stretch reads MFPLLIVLSQLPRLTLA. Residues 18–49 constitute a propeptide that is removed on maturation; the sequence is VPHCIRSLKDSEHAPEEVFASKEAANIFMHRR. Residues 50–113 lie on the Extracellular side of the membrane; sequence LLNNRFDLEL…GSDVNKEKID (64 aa). Residues 52-98 form the Gla domain; the sequence is NNRFDLELFTPGDLERECYEEFCSYEEAREILGDDENTIKFWQTYSI. The cysteines at positions 69 and 74 are disulfide-linked. Residue Glu-72 is modified to 4-carboxyglutamate. The chain crosses the membrane as a helical span at residues 114 to 134; that stretch reads VMSLLTGLIVAGVFLVIFGLV. Residues 135 to 226 are Cytoplasmic-facing; sequence GYYVCLTKCK…FKKSMSLPSH (92 aa). Ser-164 bears the Phosphoserine mark. The short motif at 186 to 189 is the LPXY motif; mediates binding to WW domain-containing proteins element; that stretch reads LPSY. A PPXY motif; mediates binding to WW domain-containing proteins motif is present at residues 204–207; it reads PPPY.

Belongs to the commissureless family. As to quaternary structure, interacts (via cytoplasmic domain) with WW domain-containing proteins MAGI1, MAGI3, NEDD4, NEDD4L, WWTR1/TAZ and YAP1. In terms of processing, gamma-carboxyglutamate residues are formed by vitamin K dependent carboxylation. These residues are essential for the binding of calcium.

The protein resides in the endoplasmic reticulum-Golgi intermediate compartment membrane. Its subcellular location is the cell membrane. Functionally, may control axon guidance across the CNS. Prevents the delivery of ROBO1 at the cell surface and down-regulates its expression. The chain is Transmembrane gamma-carboxyglutamic acid protein 4 (Prrg4) from Mus musculus (Mouse).